The chain runs to 1391 residues: DNA-directed RNA polymerase subunit beta (1391 aa).

This sequence belongs to the RNA polymerase beta chain family. In terms of assembly, the RNAP catalytic core consists of 2 alpha, 1 beta, 1 beta' and 1 omega subunit. When a sigma factor is associated with the core the holoenzyme is formed, which can initiate transcription.

The enzyme catalyses RNA(n) + a ribonucleoside 5'-triphosphate = RNA(n+1) + diphosphate. In terms of biological role, DNA-dependent RNA polymerase catalyzes the transcription of DNA into RNA using the four ribonucleoside triphosphates as substrates. In Mycoplasma pneumoniae (strain ATCC 29342 / M129 / Subtype 1) (Mycoplasmoides pneumoniae), this protein is DNA-directed RNA polymerase subunit beta.